Here is a 409-residue protein sequence, read N- to C-terminus: Mitochondrial import inner membrane translocase subunit TIM50-B (409 aa).

Residues 1-42 (MSLIAIERVLCGWPKICRKLIVTSRSLTSGLRRALVKQPRKG) constitute a mitochondrion transit peptide. Topologically, residues 43–127 (GDVGKPGMEL…ELERAFRRMK (85 aa)) are mitochondrial matrix. A disordered region spans residues 93–114 (PQTSEESNDEESRERRKLEEEE). Residues 102-111 (EESRERRKLE) show a composition bias toward basic and acidic residues. Residues 128-148 (LGFGLFGIGSMLFSFWAIYFY) traverse the membrane as a helical segment. Topologically, residues 149 to 409 (GRPSLDEHGN…KNWTRGFINH (261 aa)) are mitochondrial intermembrane. Positions 205-348 (YVQPPYTLVL…FELTSFLSVL (144 aa)) constitute an FCP1 homology domain.

Belongs to the TIM50 family. Component of the TIM23 complex at least composed of Tim23, Tim17 (Tim17a1, Tim17a2 or Tim17b1) and a Tim50. As to expression, exclusively expressed in the testis.

It localises to the mitochondrion inner membrane. Essential component of the TIM23 complex, a complex that mediates the translocation of transit peptide-containing proteins across the mitochondrial inner membrane. The sequence is that of Mitochondrial import inner membrane translocase subunit TIM50-B (ttm2) from Drosophila melanogaster (Fruit fly).